Reading from the N-terminus, the 31-residue chain is Cyclotide psybry A (31 aa).

The segment at residues 1–31 is a cross-link (cyclopeptide (Gly-Asn)); the sequence is GFNPCGETCIWFPTCHAPGCTCSIANICVRN. 3 disulfide bridges follow: C5/C20, C9/C22, and C15/C28.

This is a cyclic peptide.

In terms of biological role, probably participates in a plant defense mechanism. This Psychotria brachyceras protein is Cyclotide psybry A.